The primary structure comprises 318 residues: NADH-ubiquinone oxidoreductase chain 1 (318 aa).

Transmembrane regions (helical) follow at residues 2–22, 69–89, 102–122, 146–166, 171–191, 222–242, 253–273, and 294–314; these read FLIN…FLTL, FLFT…WAPL, LLFI…SGWA, MTTI…TAFA, HLWL…STLA, LFFM…VILF, EIST…FLWV, and LPLT…LACI.

It belongs to the complex I subunit 1 family. As to quaternary structure, core subunit of respiratory chain NADH dehydrogenase (Complex I) which is composed of 45 different subunits.

Its subcellular location is the mitochondrion inner membrane. It catalyses the reaction a ubiquinone + NADH + 5 H(+)(in) = a ubiquinol + NAD(+) + 4 H(+)(out). Core subunit of the mitochondrial membrane respiratory chain NADH dehydrogenase (Complex I) which catalyzes electron transfer from NADH through the respiratory chain, using ubiquinone as an electron acceptor. Essential for the catalytic activity and assembly of complex I. This Elephas maximus (Indian elephant) protein is NADH-ubiquinone oxidoreductase chain 1 (MT-ND1).